Consider the following 1597-residue polypeptide: Pentafunctional AROM polypeptide (1597 aa).

The segment at 1–384 (MGVPTKISIL…HEPRASTVSN (384 aa)) is 3-dehydroquinate synthase. Residues 44 to 46 (DTN), 81 to 84 (ESSK), 114 to 116 (GGV), and aspartate 119 contribute to the NAD(+) site. 7-phospho-2-dehydro-3-deoxy-D-arabino-heptonate is bound at residue arginine 130. 139–140 (TT) lines the NAD(+) pocket. Residues aspartate 146 and lysine 152 each coordinate 7-phospho-2-dehydro-3-deoxy-D-arabino-heptonate. Lysine 161 serves as a coordination point for NAD(+). Position 162 (asparagine 162) interacts with 7-phospho-2-dehydro-3-deoxy-D-arabino-heptonate. NAD(+) contacts are provided by residues 179–182 (FLNT) and asparagine 190. Position 194 (glutamate 194) interacts with Zn(2+). 7-phospho-2-dehydro-3-deoxy-D-arabino-heptonate is bound by residues 194–197 (EVIK) and lysine 250. Catalysis depends on glutamate 260, which acts as the Proton acceptor; for 3-dehydroquinate synthase activity. 7-phospho-2-dehydro-3-deoxy-D-arabino-heptonate contacts are provided by residues 264–268 (RNLLN) and histidine 271. Residue histidine 271 participates in Zn(2+) binding. The active-site Proton acceptor; for 3-dehydroquinate synthase activity is histidine 275. Residues histidine 287 and lysine 356 each contribute to the 7-phospho-2-dehydro-3-deoxy-D-arabino-heptonate site. Residue histidine 287 coordinates Zn(2+). The interval 397–842 (VSPGVPKNLN…WDSLAQTFKV (446 aa)) is EPSP synthase. The active-site For EPSP synthase activity is cysteine 824. The tract at residues 866 to 1057 (ASIFIIGMRG…RSKENTFFVS (192 aa)) is shikimate kinase. Position 872-879 (872-879 (GMRGAGKT)) interacts with ATP. The 3-dehydroquinase stretch occupies residues 1058–1278 (LTLPDLAPAA…AAPGQLSARE (221 aa)). The active-site Proton acceptor; for 3-dehydroquinate dehydratase activity is histidine 1181. Lysine 1209 functions as the Schiff-base intermediate with substrate; for 3-dehydroquinate dehydratase activity in the catalytic mechanism. The tract at residues 1291–1597 (SKKFAVIGNP…VQPKDDDIST (307 aa)) is shikimate dehydrogenase.

This sequence in the N-terminal section; belongs to the sugar phosphate cyclases superfamily. Dehydroquinate synthase family. It in the 2nd section; belongs to the EPSP synthase family. The protein in the 3rd section; belongs to the shikimate kinase family. In the 4th section; belongs to the type-I 3-dehydroquinase family. This sequence in the C-terminal section; belongs to the shikimate dehydrogenase family. Homodimer. Requires Zn(2+) as cofactor.

Its subcellular location is the cytoplasm. It carries out the reaction 7-phospho-2-dehydro-3-deoxy-D-arabino-heptonate = 3-dehydroquinate + phosphate. The catalysed reaction is 3-dehydroquinate = 3-dehydroshikimate + H2O. It catalyses the reaction shikimate + NADP(+) = 3-dehydroshikimate + NADPH + H(+). The enzyme catalyses shikimate + ATP = 3-phosphoshikimate + ADP + H(+). It carries out the reaction 3-phosphoshikimate + phosphoenolpyruvate = 5-O-(1-carboxyvinyl)-3-phosphoshikimate + phosphate. The protein operates within metabolic intermediate biosynthesis; chorismate biosynthesis; chorismate from D-erythrose 4-phosphate and phosphoenolpyruvate: step 2/7. It functions in the pathway metabolic intermediate biosynthesis; chorismate biosynthesis; chorismate from D-erythrose 4-phosphate and phosphoenolpyruvate: step 3/7. Its pathway is metabolic intermediate biosynthesis; chorismate biosynthesis; chorismate from D-erythrose 4-phosphate and phosphoenolpyruvate: step 4/7. It participates in metabolic intermediate biosynthesis; chorismate biosynthesis; chorismate from D-erythrose 4-phosphate and phosphoenolpyruvate: step 5/7. The protein operates within metabolic intermediate biosynthesis; chorismate biosynthesis; chorismate from D-erythrose 4-phosphate and phosphoenolpyruvate: step 6/7. The AROM polypeptide catalyzes 5 consecutive enzymatic reactions in prechorismate polyaromatic amino acid biosynthesis. This chain is Pentafunctional AROM polypeptide, found in Blastomyces gilchristii (strain SLH14081) (Blastomyces dermatitidis).